A 266-amino-acid polypeptide reads, in one-letter code: Thymidylate synthase (266 aa).

Residue Arg24 participates in dUMP binding. His54 is a (6R)-5,10-methylene-5,6,7,8-tetrahydrofolate binding site. 129-130 serves as a coordination point for dUMP; it reads RR. Residue Cys149 is the Nucleophile of the active site. DUMP contacts are provided by residues 169–172, Asn180, and 210–212; these read RSAD and HIY. Asp172 provides a ligand contact to (6R)-5,10-methylene-5,6,7,8-tetrahydrofolate. Residue Ala265 coordinates (6R)-5,10-methylene-5,6,7,8-tetrahydrofolate.

It belongs to the thymidylate synthase family. Bacterial-type ThyA subfamily. In terms of assembly, homodimer.

The protein resides in the cytoplasm. It catalyses the reaction dUMP + (6R)-5,10-methylene-5,6,7,8-tetrahydrofolate = 7,8-dihydrofolate + dTMP. The protein operates within pyrimidine metabolism; dTTP biosynthesis. Functionally, catalyzes the reductive methylation of 2'-deoxyuridine-5'-monophosphate (dUMP) to 2'-deoxythymidine-5'-monophosphate (dTMP) while utilizing 5,10-methylenetetrahydrofolate (mTHF) as the methyl donor and reductant in the reaction, yielding dihydrofolate (DHF) as a by-product. This enzymatic reaction provides an intracellular de novo source of dTMP, an essential precursor for DNA biosynthesis. The chain is Thymidylate synthase from Mycobacterium sp. (strain KMS).